The following is a 298-amino-acid chain: Aspartate carbamoyltransferase catalytic subunit (298 aa).

2 residues coordinate carbamoyl phosphate: Arg50 and Thr51. Lys79 is an L-aspartate binding site. Positions 100, 128, and 131 each coordinate carbamoyl phosphate. Positions 161 and 220 each coordinate L-aspartate. Positions 259 and 260 each coordinate carbamoyl phosphate.

This sequence belongs to the aspartate/ornithine carbamoyltransferase superfamily. ATCase family. Heterooligomer of catalytic and regulatory chains.

It carries out the reaction carbamoyl phosphate + L-aspartate = N-carbamoyl-L-aspartate + phosphate + H(+). It functions in the pathway pyrimidine metabolism; UMP biosynthesis via de novo pathway; (S)-dihydroorotate from bicarbonate: step 2/3. In terms of biological role, catalyzes the condensation of carbamoyl phosphate and aspartate to form carbamoyl aspartate and inorganic phosphate, the committed step in the de novo pyrimidine nucleotide biosynthesis pathway. The sequence is that of Aspartate carbamoyltransferase catalytic subunit from Sulfurisphaera tokodaii (strain DSM 16993 / JCM 10545 / NBRC 100140 / 7) (Sulfolobus tokodaii).